The chain runs to 154 residues: MKCPFCAHPDTRVADSRLMEERNAVRRRRHCPNCGKRFGTLETAELKMPAVIGPDKKRSPFNAQRLRNDLTAAARKSALTPEQIDETVRLTEHRLYTSGQRDIPSAALADMVLKELLRQDTEAAVRFAALHKRFDNPADFASWLAQAVKTGGKA.

Residues cysteine 3–cysteine 34 fold into a zinc finger. The ATP-cone domain maps to proline 49–aspartate 139.

The protein belongs to the NrdR family. The cofactor is Zn(2+).

Its function is as follows. Negatively regulates transcription of bacterial ribonucleotide reductase nrd genes and operons by binding to NrdR-boxes. This is Transcriptional repressor NrdR from Neisseria meningitidis serogroup B (strain ATCC BAA-335 / MC58).